The chain runs to 671 residues: MSEESRKHDIEEQHIEKWIPLKERKLNQIKSKLNNLKQQQPQQHSQQQENEQNNATATNTNITNTTTTTTTTTTTTTSSNNDNNFEDEKKPIYQQSQSLLDQKFEMIKKQENKTQRELQQGGTIIENDVNSSNNNNNNGEENKIKEEKRLDMEESDILKSLKTFKPLVSVKDRAKDVIYTDSIKTNWRAPRYILERDEKDHQKVRDQLNIITDGEDIPPPITTFKEMKIPKPVIDVLLEKGIKKPSPIQVQGLPVILSGRDMIGIAYTGSGKTLVFTLPMVLFALEEECKLPIIQGEGPFGLILCPSRELARQTYDLVNSFTNALHKNGGHPQLRTLLAIGGIDLREQEHIFKKGVHMIIATPGRLLDLLNKKKINFKLCKYLGLDEADRLIDLGFEDDIRSVLDNFTNQRQTLLFSATMPKKIQEFARSALVLPVEVNVGRAGAANLNVTQEVEFVKPEAKIVYLLECLQKTPPPVLIFCENKKDVDDIYEYLLLKQVEAVSIHGDKSQDERESAIKAFREGKKDVLVATDVASKGLDFPEIQHVINFDMPREIENYIHRIGRTGRRGNKGVATTFINKNNTESLLLDLKYLLIEAKQKVPPALLEIPDDNQYLQKLQDRNGNTGGGADDDDTKPCEYCDGRGHRLVNCPKLKKQAGPKRDFFGSGGGDW.

Coiled-coil stretches lie at residues 19 to 43 (IPLK…QPQQ) and 100 to 154 (LDQK…DMEE). Low complexity-rich tracts occupy residues 33 to 83 (LNNL…NNDN) and 125 to 139 (IEND…NNNG). Disordered regions lie at residues 33–88 (LNNL…FEDE) and 125–148 (IEND…KEEK). The Q motif motif lies at 222–250 (TTFKEMKIPKPVIDVLLEKGIKKPSPIQV). Residues 253 to 438 (LPVILSGRDM…RSALVLPVEV (186 aa)) form the Helicase ATP-binding domain. Residue 266–273 (AYTGSGKT) coordinates ATP. The DEAD box signature appears at 386-389 (DEAD). The Helicase C-terminal domain maps to 449 to 609 (NVTQEVEFVK…KVPPALLEIP (161 aa)). Residues 617-636 (KLQDRNGNTGGGADDDDTKP) form a disordered region. The CCHC-type zinc-finger motif lies at 635–652 (KPCEYCDGRGHRLVNCPK).

Belongs to the DEAD box helicase family. DDX41 subfamily.

It is found in the nucleus. The enzyme catalyses ATP + H2O = ADP + phosphate + H(+). The chain is Probable ATP-dependent RNA helicase ddx41 (ddx41) from Dictyostelium discoideum (Social amoeba).